The primary structure comprises 83 residues: Cobrotoxin (83 aa).

An N-terminal signal peptide occupies residues 1–21 (MKTLLLTLLVVTIVCLDLGYT). Cystine bridges form between Cys-24-Cys-45, Cys-38-Cys-62, Cys-64-Cys-75, and Cys-76-Cys-81.

This sequence belongs to the three-finger toxin family. Short-chain subfamily. Type I alpha-neurotoxin sub-subfamily. In terms of tissue distribution, expressed by the venom gland.

It localises to the secreted. Binds to muscle nicotinic acetylcholine receptor (nAChR) and inhibit acetylcholine from binding to the receptor, thereby impairing neuromuscular transmission. Has a higher toxicity than cobrotoxin-b. In vivo, when tested on rat arthritis models, shows anti-inflammation and immunosuppression effects. The chain is Cobrotoxin from Naja atra (Chinese cobra).